Here is a 495-residue protein sequence, read N- to C-terminus: Acetyl-coenzyme A carboxylase carboxyl transferase subunit beta, chloroplastic (495 aa).

A disordered region spans residues S188–L208. Residues L226–K495 form the CoA carboxyltransferase N-terminal domain. 4 residues coordinate Zn(2+): C230, C233, C249, and C252. A C4-type zinc finger spans residues C230–C252.

The protein belongs to the AccD/PCCB family. In terms of assembly, acetyl-CoA carboxylase is a heterohexamer composed of biotin carboxyl carrier protein, biotin carboxylase and 2 subunits each of ACCase subunit alpha and ACCase plastid-coded subunit beta (accD). Zn(2+) is required as a cofactor.

The protein resides in the plastid. The protein localises to the chloroplast stroma. It carries out the reaction N(6)-carboxybiotinyl-L-lysyl-[protein] + acetyl-CoA = N(6)-biotinyl-L-lysyl-[protein] + malonyl-CoA. It participates in lipid metabolism; malonyl-CoA biosynthesis; malonyl-CoA from acetyl-CoA: step 1/1. Component of the acetyl coenzyme A carboxylase (ACC) complex. Biotin carboxylase (BC) catalyzes the carboxylation of biotin on its carrier protein (BCCP) and then the CO(2) group is transferred by the transcarboxylase to acetyl-CoA to form malonyl-CoA. This Nicotiana tomentosiformis (Tobacco) protein is Acetyl-coenzyme A carboxylase carboxyl transferase subunit beta, chloroplastic.